The primary structure comprises 89 residues: MSLSKEVKAQILADFGRGENDTGSTEVQVALLTAQINHLQGHFKEHIHDHHSRRGLLRMVNSRRKLLAYLKRTENERYQELIKKLGLRR.

Belongs to the universal ribosomal protein uS15 family. Part of the 30S ribosomal subunit. Forms a bridge to the 50S subunit in the 70S ribosome, contacting the 23S rRNA.

In terms of biological role, one of the primary rRNA binding proteins, it binds directly to 16S rRNA where it helps nucleate assembly of the platform of the 30S subunit by binding and bridging several RNA helices of the 16S rRNA. Its function is as follows. Forms an intersubunit bridge (bridge B4) with the 23S rRNA of the 50S subunit in the ribosome. The sequence is that of Small ribosomal subunit protein uS15 from Shewanella loihica (strain ATCC BAA-1088 / PV-4).